Here is a 157-residue protein sequence, read N- to C-terminus: UPF0178 protein BH1374 (157 aa).

This sequence belongs to the UPF0178 family.

The polypeptide is UPF0178 protein BH1374 (Halalkalibacterium halodurans (strain ATCC BAA-125 / DSM 18197 / FERM 7344 / JCM 9153 / C-125) (Bacillus halodurans)).